A 434-amino-acid chain; its full sequence is ATP-dependent protease ATPase subunit HslU (434 aa).

Residues Ile-18, 60-65 (GVGKTE), Asp-247, Glu-312, and Arg-384 contribute to the ATP site.

This sequence belongs to the ClpX chaperone family. HslU subfamily. A double ring-shaped homohexamer of HslV is capped on each side by a ring-shaped HslU homohexamer. The assembly of the HslU/HslV complex is dependent on binding of ATP.

Its subcellular location is the cytoplasm. Functionally, ATPase subunit of a proteasome-like degradation complex; this subunit has chaperone activity. The binding of ATP and its subsequent hydrolysis by HslU are essential for unfolding of protein substrates subsequently hydrolyzed by HslV. HslU recognizes the N-terminal part of its protein substrates and unfolds these before they are guided to HslV for hydrolysis. This Brucella melitensis biotype 1 (strain ATCC 23456 / CCUG 17765 / NCTC 10094 / 16M) protein is ATP-dependent protease ATPase subunit HslU.